The sequence spans 96 residues: MALGNGYYCAVVCVVLACASVVLCAPAQLCAGAADDDPRAARFCQALNTFLELYAEAAGEQVPEYQALVRDYPQLLDTGMKRQDVVHSFLRFGRRR.

The N-terminal stretch at 1–24 (MALGNGYYCAVVCVVLACASVVLC) is a signal peptide. Positions 25-80 (APAQLCAGAADDDPRAARFCQALNTFLELYAEAAGEQVPEYQALVRDYPQLLDTGM) are excised as a propeptide. Gln-83 carries the post-translational modification Pyrrolidone carboxylic acid; partial. Phe-92 is modified (phenylalanine amide). Arg-96 is a propeptide.

It belongs to the myosuppressin family. In terms of tissue distribution, expressed in corpora cardiaca (CC), corpora allata (CA), antennal lobe (AL) and gnathal ganglion (GNG) (at protein level). In its non-pyroglutamate form, expression in GNG detected in all animals, in AL, CC and in CA in most animals (at protein level). In its pyroglutamate form, expression in CC, CA and GNG detected in all animals, in AL in some animals (at protein level).

It is found in the secreted. Myoinhibiting neuropeptide. This chain is Myosuppressin, found in Agrotis ipsilon (Black cutworm moth).